Consider the following 174-residue polypeptide: Co-chaperone protein HscB homolog (174 aa).

Residues 2 to 74 (NYFDLFNVVP…LRRAEHMLSL (73 aa)) form the J domain.

Belongs to the HscB family. As to quaternary structure, interacts with HscA and stimulates its ATPase activity.

Functionally, co-chaperone involved in the maturation of iron-sulfur cluster-containing proteins. Seems to help targeting proteins to be folded toward HscA. The polypeptide is Co-chaperone protein HscB homolog (Shewanella frigidimarina (strain NCIMB 400)).